The sequence spans 496 residues: Myotilin (496 aa).

The interval 1 to 37 (MFNYERPKHFIQPQNPCGSRLQPPGPEVSGFPSQTKQ) is disordered. R20 carries the omega-N-methylarginine modification. The necessary for interaction with ACTN1 stretch occupies residues 78 to 149 (PNPGQKVTAT…PTPKTPDHEI (72 aa)). Composition is skewed to polar residues over residues 202–213 (NSDVQDSPQHNP) and 221–233 (PTSQ…SSRA). The disordered stretch occupies residues 202–239 (NSDVQDSPQHNPEQARLHVPTSQVRSRSSSRAEANDQD). The segment at 213–491 (PEQARLHVPT…QRLAAQSGLY (279 aa)) is necessary for interaction with FLNC. The segment at 213–496 (PEQARLHVPT…QSGLYESEEL (284 aa)) is necessary for interaction with ACTA1. Ig-like C2-type domains are found at residues 248-333 (PRFI…ATFT) and 347-439 (PMFI…LDVT).

It belongs to the myotilin/palladin family. Homodimer. Interacts with ACTA1, ACTN1, FLNA, FLNB, FLNC, and MYOZ2. Interacts with the C-terminal region of MYOZ1. In terms of tissue distribution, expressed in skeletal muscle (at protein level).

The protein localises to the cell membrane. It is found in the sarcolemma. The protein resides in the cytoplasm. Its subcellular location is the cytoskeleton. It localises to the myofibril. The protein localises to the sarcomere. It is found in the z line. In terms of biological role, component of a complex of multiple actin cross-linking proteins. Involved in the control of myofibril assembly and stability at the Z lines in muscle cells. The chain is Myotilin (Myot) from Mus musculus (Mouse).